A 156-amino-acid chain; its full sequence is Small ribosomal subunit protein uS7A/uS7B (156 aa).

The protein belongs to the universal ribosomal protein uS7 family. Part of the 30S ribosomal subunit. Contacts proteins S9 and S11.

In terms of biological role, one of the primary rRNA binding proteins, it binds directly to 16S rRNA where it nucleates assembly of the head domain of the 30S subunit. Is located at the subunit interface close to the decoding center, probably blocks exit of the E-site tRNA. The sequence is that of Small ribosomal subunit protein uS7A/uS7B from Cereibacter sphaeroides (strain ATCC 17029 / ATH 2.4.9) (Rhodobacter sphaeroides).